A 1198-amino-acid polypeptide reads, in one-letter code: Regulator of G-protein signaling 3 (1198 aa).

In terms of domain architecture, C2 spans 137–256 (GAGQLRLSID…TPDKEISGWY (120 aa)). A PDZ domain is found at 299-376 (KITIPRGKDG…EIILLVWRMV (78 aa)). Arg448 carries the post-translational modification Omega-N-methylarginine. The segment at 669-933 (QQLAASPPDS…GAEGGLSLRV (265 aa)) is disordered. Ser674 bears the Phosphoserine mark. Over residues 679–697 (KMFETEADEKREMALEEGK) the composition is skewed to basic and acidic residues. The segment covering 739 to 751 (EPLSSKDSATSEG) has biased composition (polar residues). Residues 753–773 (PPGPDAPPSKDVPPCQEPPPA) show a composition bias toward pro residues. The span at 877–906 (GDEEDAEEAEEVEEGEEGEEDEDEDTSDDN) shows a compositional bias: acidic residues. Basic and acidic residues predominate over residues 907-917 (YGERSEAKRSS). Phosphoserine is present on residues Ser943, Ser946, Ser978, and Ser1007. Disordered stretches follow at residues 1007-1026 (SGADTVGDDDEASRKRKSKN) and 1032-1056 (KNKLGIFRRRNESPGAPPAGKADKM). The RGS domain maps to 1073–1198 (SLEKLLVHKY…INQKKMSPPL (126 aa)).

Binds EFNB1 and EFNB2. Binds the GNB1-GNG2 heterodimer. Post-translationally, phosphorylated by cyclic GMP-dependent protein kinase. In terms of processing, ISGylated.

It is found in the cytoplasm. The protein resides in the nucleus. Its subcellular location is the cell membrane. In terms of biological role, down-regulates signaling from heterotrimeric G-proteins by increasing the GTPase activity of the alpha subunits, thereby driving them into their inactive GDP-bound form. Down-regulates G-protein-mediated release of inositol phosphates and activation of MAP kinases. This Homo sapiens (Human) protein is Regulator of G-protein signaling 3 (RGS3).